A 675-amino-acid polypeptide reads, in one-letter code: Parasporal crystal protein Cry18Ba (675 aa).

It belongs to the delta endotoxin family.

In terms of biological role, binds to the brush border membrane vesicles of scarab larvae and damages the gut wall somehow to allow the vegetative cells of P.popilliae to enter the hemolymph. The protein is Parasporal crystal protein Cry18Ba (cry18Ba) of Paenibacillus popilliae (Bacillus popilliae).